We begin with the raw amino-acid sequence, 478 residues long: Zinc metalloproteinase/disintegrin VMP-II (478 aa).

A signal peptide spans 1–20 (MIQVLLVTICLAVFPYQGSS). Residues 21–190 (IILESGNVND…KASQLNLTPE (170 aa)) constitute a propeptide that is removed on maturation. The 197-residue stretch at 197–393 (RYIELVIVAD…HNPQCMLNEP (197 aa)) folds into the Peptidase M12B domain. Positions 200 and 284 each coordinate Ca(2+). 3 disulfide bridges follow: Cys308–Cys388, Cys348–Cys372, and Cys350–Cys355. Position 333 (His333) interacts with Zn(2+). Glu334 is an active-site residue. Zn(2+) contacts are provided by His337 and His343. Ca(2+)-binding residues include Cys388 and Asn391. A propeptide spanning residues 394 to 405 (LGTDTVSRNELL) is cleaved from the precursor. Residues 414–478 (GSPANPCCDA…ADCPRNRFHA (65 aa)) enclose the Disintegrin domain. Intrachain disulfides connect Cys420-Cys443, Cys434-Cys440, Cys439-Cys464, and Cys452-Cys471. Residues 456 to 458 (RGD) carry the Cell attachment site motif.

This sequence belongs to the venom metalloproteinase (M12B) family. P-II subfamily. P-IIe sub-subfamily. As to quaternary structure, heterodimer; disulfide-linked (disintegrin). The cofactor is Zn(2+). Expressed by the venom gland.

It is found in the secreted. Functionally, impairs hemostasis in the envenomed animal. This recombinant protein inhibits ADP-induced platelet aggregation in whole human blood and this effect is concentration-dependent with an IC(50) of 34 nM. The protein is Zinc metalloproteinase/disintegrin VMP-II of Crotalus viridis viridis (Prairie rattlesnake).